The primary structure comprises 399 residues: Odorant receptor 42b (399 aa).

Residues Met-1–Tyr-45 lie on the Cytoplasmic side of the membrane. A helical membrane pass occupies residues Leu-46–Gly-66. Over Ser-67–Ser-83 the chain is Extracellular. Residues Leu-84–Leu-104 form a helical membrane-spanning segment. Topologically, residues Trp-105–Ala-140 are cytoplasmic. A helical transmembrane segment spans residues Phe-141–Leu-161. Residues Ser-162–Asp-178 are Extracellular-facing. Residues Gly-179 to Leu-199 traverse the membrane as a helical segment. Residues Gln-200 to Thr-268 are Cytoplasmic-facing. The helical transmembrane segment at Ile-269–Phe-289 threads the bilayer. Topologically, residues Phe-290–Asp-292 are extracellular. A helical transmembrane segment spans residues Ile-293–Phe-313. The Cytoplasmic portion of the chain corresponds to Cys-314–Gln-356. Residues Pro-357 to Ala-377 form a helical membrane-spanning segment. The Extracellular segment spans residues Lys-378–Asp-399.

It belongs to the insect chemoreceptor superfamily. Heteromeric odorant receptor channel (TC 1.A.69) family. Or2a subfamily. Interacts with Orco. Complexes exist early in the endomembrane system in olfactory sensory neurons (OSNs), coupling these complexes to the conserved ciliary trafficking pathway. Expressed in olfactory sensory neurons in the antenna.

It is found in the cell membrane. Functionally, odorant receptor which mediates acceptance or avoidance behavior, depending on its substrates. The odorant receptor repertoire encodes a large collection of odor stimuli that vary widely in identity, intensity, and duration. May form a complex with Orco to form odorant-sensing units, providing sensitive and prolonged odorant signaling and calcium permeability. Involved in the behavioral responses to ethyl acetate and pentyl acetate. This chain is Odorant receptor 42b (Or42b), found in Drosophila melanogaster (Fruit fly).